The primary structure comprises 146 residues: Hemoglobin subunit beta (146 aa).

Val1 carries the N-acetylvaline modification. The 145-residue stretch at 2 to 146 folds into the Globin domain; that stretch reads HLTGEEKAAV…VANALAHKYH (145 aa). At Thr12 the chain carries Phosphothreonine. A Phosphoserine modification is found at Ser44. Lys59 is subject to N6-acetyllysine. Residue His63 participates in heme b binding. Lys82 is subject to N6-acetyllysine. Residue His92 coordinates heme b. Position 93 is an S-nitrosocysteine (Cys93). An N6-acetyllysine modification is found at Lys144.

It belongs to the globin family. Heterotetramer of two alpha chains and two beta chains. In terms of tissue distribution, red blood cells.

Functionally, involved in oxygen transport from the lung to the various peripheral tissues. The protein is Hemoglobin subunit beta (HBB) of Aotus trivirgatus (Three-striped night monkey).